The following is a 297-amino-acid chain: Transmembrane protein 178A (297 aa).

The N-terminal stretch at 1–25 (MEPRALVTALSLGLSLCSLGLLVTA) is a signal peptide. Topologically, residues 26 to 179 (IFTDHWYETD…LLHLRRITAG (154 aa)) are extracellular. The segment covering 41-57 (ESCERSRAGADPPDQKN) has biased composition (basic and acidic residues). A disordered region spans residues 41–84 (ESCERSRAGADPPDQKNRLMPLSHLPLRDSPPLGRRLLPGGPGR). A compositionally biased stretch (low complexity) spans 68–79 (RDSPPLGRRLLP). An N-linked (GlcNAc...) asparagine glycan is attached at Asn158. A helical membrane pass occupies residues 180-200 (FLGMAVAVLLCGCIVATVSFF). Topologically, residues 201–208 (WEESLTQH) are cytoplasmic. The helical transmembrane segment at 209–229 (VAGLLFLMTGIFCTISLCTYA) threads the bilayer. Residues 230–257 (ASISYDLNRLPKLIYSLPADVEHGYSWS) lie on the Extracellular side of the membrane. The helical transmembrane segment at 258-278 (IFCAWCSLGFIVAAGGLCIAY) threads the bilayer. Residues 279–297 (PFISRTKIAQLKSGRDSTV) lie on the Cytoplasmic side of the membrane.

It belongs to the TMEM178 family. As to quaternary structure, interacts with STIM1.

It localises to the endoplasmic reticulum membrane. Functionally, acts as a negative regulator of osteoclast differentiation in basal and inflammatory conditions by regulating TNFSF11-induced Ca (2+) fluxes, thereby controlling the induction of NFATC1. The protein is Transmembrane protein 178A (TMEM178A) of Homo sapiens (Human).